Here is a 71-residue protein sequence, read N- to C-terminus: Sec-independent protein translocase protein TatA (71 aa).

Residues 1–21 form a helical membrane-spanning segment; sequence MGSFSIWHWLIVLVVVLLLFG. The interval 47–71 is disordered; it reads AEEAKTVEHRTDEPVGEVKQKASKS. The span at 49 to 71 shows a compositional bias: basic and acidic residues; the sequence is EAKTVEHRTDEPVGEVKQKASKS.

The protein belongs to the TatA/E family. In terms of assembly, the Tat system comprises two distinct complexes: a TatABC complex, containing multiple copies of TatA, TatB and TatC subunits, and a separate TatA complex, containing only TatA subunits. Substrates initially bind to the TatABC complex, which probably triggers association of the separate TatA complex to form the active translocon.

The protein resides in the cell inner membrane. Its function is as follows. Part of the twin-arginine translocation (Tat) system that transports large folded proteins containing a characteristic twin-arginine motif in their signal peptide across membranes. TatA could form the protein-conducting channel of the Tat system. The polypeptide is Sec-independent protein translocase protein TatA (Chelativorans sp. (strain BNC1)).